A 1203-amino-acid chain; its full sequence is Transmembrane channel-like protein 2 (1203 aa).

2 disordered regions span residues 1-39 and 64-90; these read MPKSGAHQPLVRHDTDDGGETGQSVKSLADVSEEEIDSR and PHTRLGNPNFDDDDDEFDEEDDKEASK. Residues 73-86 are compositionally biased toward acidic residues; sequence FDDDDDEFDEEDDK. A helical membrane pass occupies residues 191–213; sequence VLGVNITITFIMCMFVVIPEWLA. An N-linked (GlcNAc...) asparagine glycan is attached at N225. 6 consecutive transmembrane segments (helical) span residues 276–298, 369–391, 406–428, 441–463, 665–687, and 714–736; these read YRVPVAYFFCNIFILGFSLFIIL, FVARVLTNLFICAMYVFSIWAIM, ATAITISLITLVFPNIFDLLGKI, LGRVLVLYILNYYTLIYSLMLQL, MIWLGLFFVPLLPMLNNIKLIIL, and FFFALLILFLFLCTLPVGFVIAS. N-linked (GlcNAc...) asparagine glycosylation is present at N748. Residues 780–802 traverse the membrane as a helical segment; the sequence is IIIPVLVLLSLVIYFLIAMVTGL. Disordered stretches follow at residues 826 to 908, 927 to 1039, 1059 to 1087, and 1112 to 1203; these read ELAG…SLPP, KYGR…IEKQ, ATVENSSQDPTRPPSTDDSLGDPALHEPL, and NDET…SDND. Positions 865–874 are enriched in polar residues; it reads NRSTAKSVSG. Low complexity predominate over residues 898 to 908; it reads DSESTTSSLPP. The span at 927–945 shows a compositional bias: basic and acidic residues; the sequence is KYGRHDDIEMEEGGGRLRE. 2 stretches are compositionally biased toward low complexity: residues 973–997 and 1022–1035; these read QSFDQNSQSASASSSKSTTTAPSNS and SASSSSSSHQPSSS. Over residues 1061 to 1076 the composition is skewed to polar residues; the sequence is VENSSQDPTRPPSTDD. Composition is skewed to basic and acidic residues over residues 1133-1147 and 1172-1203; these read SPRELKRLKREKDQQ and PPSEKNDSDSSNRKYEMRVEKSPKKPKKSDND.

Belongs to the TMC family.

Its subcellular location is the membrane. In terms of biological role, probable ion channel. The chain is Transmembrane channel-like protein 2 (tmc-2) from Caenorhabditis elegans.